Here is a 481-residue protein sequence, read N- to C-terminus: Glutamyl-tRNA(Gln) amidotransferase subunit A (481 aa).

Residues K76 and S151 each act as charge relay system in the active site. S175 acts as the Acyl-ester intermediate in catalysis.

Belongs to the amidase family. GatA subfamily. In terms of assembly, heterotrimer of A, B and C subunits.

The catalysed reaction is L-glutamyl-tRNA(Gln) + L-glutamine + ATP + H2O = L-glutaminyl-tRNA(Gln) + L-glutamate + ADP + phosphate + H(+). Allows the formation of correctly charged Gln-tRNA(Gln) through the transamidation of misacylated Glu-tRNA(Gln) in organisms which lack glutaminyl-tRNA synthetase. The reaction takes place in the presence of glutamine and ATP through an activated gamma-phospho-Glu-tRNA(Gln). This Neisseria gonorrhoeae (strain NCCP11945) protein is Glutamyl-tRNA(Gln) amidotransferase subunit A.